The following is a 304-amino-acid chain: Serine protease 30 (304 aa).

Positions 1–21 (MESWARCIFLLLLQILTGGRG) are cleaved as a signal peptide. A propeptide spans 22–30 (DILHSGAGK) (activation peptide). The Peptidase S1 domain maps to 31–271 (IVGGQDAPEG…YVDWIQRTLA (241 aa)). C57 and C73 form a disulfide bridge. Residue H72 is the Charge relay system of the active site. N79 is a glycosylation site (N-linked (GlcNAc...) asparagine). D122 serves as the catalytic Charge relay system. 3 disulfide bridges follow: C155/C229, C185/C208, and C219/C247. S223 (charge relay system) is an active-site residue. N232 and N273 each carry an N-linked (GlcNAc...) asparagine glycan. Residue S275 is the site of GPI-anchor amidated serine attachment. The propeptide at 276–304 (DAYGCRSRASGAYPALLLVLLAFALPESL) is removed in mature form.

Belongs to the peptidase S1 family. In terms of tissue distribution, expressed predominantly in kidney, small intestine and stomach and moderately in thymus, lung, spleen, testis and skin. In the kidney, expressed mainly in collecting duct of renal medulla and cortex.

It localises to the cell membrane. Its activity is regulated as follows. Inhibited by aprotinin, leupeptin, benzamidine and soybean trypsin inhibitor. Partially inhibited by PMSF and DFP. Its function is as follows. Selectively cleaves synthetic peptide substrates of trypsin. Activates the epithelial sodium channel ENaC. The sequence is that of Serine protease 30 (Prss30) from Rattus norvegicus (Rat).